We begin with the raw amino-acid sequence, 843 residues long: KN motif and ankyrin repeat domain-containing protein 2 (843 aa).

The tract at residues 1-31 is disordered; sequence MAQVLHVPAPFPGTPGQASPAAFPSKEPDPP. The segment at 1–72 is interaction with AIFM1; that stretch reads MAQVLHVPAP…AVQRRPRLGS (72 aa). Residues serine 19, serine 83, serine 86, serine 89, and serine 92 each carry the phosphoserine modification. Position 105 is an omega-N-methylarginine (arginine 105). The tract at residues 161-182 is disordered; sequence LAGVGLLPPTPRSSGLSTPVAP. Position 170 is a phosphothreonine (threonine 170). Coiled-coil stretches lie at residues 183–234 and 282–313; these read SAGH…QLKS and DGEA…TQQV. The residue at position 331 (threonine 331) is a Phosphothreonine. Serine 358 is modified (phosphoserine). The segment at 410–577 is disordered; the sequence is TERSCTGAPR…VASGPDPEEE (168 aa). Positions 457–470 are enriched in low complexity; sequence AAASQDSQAADGAG. Serine 532 is subject to Phosphoserine. A compositionally biased stretch (polar residues) spans 547-561; sequence ATTSLEGPQLSQESQ. The ANK 0; degenerate repeat unit spans residues 606–643; sequence RELKVAYTTVLQEWLRLACRSDAHPELVRRHLVTFRAM. Positions 661-827 are interaction with NCOA1; the sequence is TALHYSVSHA…YSRMNIKCSF (167 aa). ANK repeat units lie at residues 673 to 703, 707 to 740, 745 to 774, 778 to 808, and 812 to 842; these read PVVR…TALA, TQDD…LAVS, DVVR…ACEH, EITG…ALDA, and EIAS…SSAE.

Interacts (non-phosphorylated form) with NCOA1; NCOA2 AND NCOA3. Interacts with AIFM1. Interacts with ARHGDIA; the interaction is direct and may regulate the interaction of ARHGDIA with RHOA, RAC1 and CDC42. Interacts (via ANK repeats 1-5) with KIF21A (via residues 1148-1169). In terms of processing, phosphorylated by casein kinase II upon estrogen stimulation. Phosphorylation induces the release by KANK2 of NCOA1 and its translocation to the nucleus where NCOA1 can activate gene transcription. In terms of tissue distribution, widely expressed with highest levels in liver and skeletal muscle.

The protein resides in the cytoplasm. Its subcellular location is the mitochondrion. Its function is as follows. Involved in transcription regulation by sequestering in the cytoplasm nuclear receptor coactivators such as NCOA1, NCOA2 and NCOA3. Involved in regulation of caspase-independent apoptosis by sequestering the proapoptotic factor AIFM1 in mitochondria. Pro-apoptotic stimuli can induce its proteasomal degradation allowing the translocation of AIFM1 to the nucleus to induce apoptosis. Involved in the negative control of vitamin D receptor signaling pathway. Involved in actin stress fibers formation through its interaction with ARHGDIA and the regulation of the Rho signaling pathway. May thereby play a role in cell adhesion and migration, regulating for instance podocytes migration during development of the kidney. Through the Rho signaling pathway may also regulate cell proliferation. This is KN motif and ankyrin repeat domain-containing protein 2 (Kank2) from Mus musculus (Mouse).